Here is a 60-residue protein sequence, read N- to C-terminus: Large ribosomal subunit protein uL30 (60 aa).

It belongs to the universal ribosomal protein uL30 family. In terms of assembly, part of the 50S ribosomal subunit.

This is Large ribosomal subunit protein uL30 from Dehalococcoides mccartyi (strain ATCC BAA-2266 / KCTC 15142 / 195) (Dehalococcoides ethenogenes (strain 195)).